Consider the following 340-residue polypeptide: UDP-N-acetylenolpyruvoylglucosamine reductase (340 aa).

In terms of domain architecture, FAD-binding PCMH-type spans 14–185; sequence HVEATARWLL…VAVEFNLPLL (172 aa). Arginine 162 is a catalytic residue. The Proton donor role is filled by serine 235. Glutamate 332 is a catalytic residue.

This sequence belongs to the MurB family. Requires FAD as cofactor.

Its subcellular location is the cytoplasm. The enzyme catalyses UDP-N-acetyl-alpha-D-muramate + NADP(+) = UDP-N-acetyl-3-O-(1-carboxyvinyl)-alpha-D-glucosamine + NADPH + H(+). It participates in cell wall biogenesis; peptidoglycan biosynthesis. In terms of biological role, cell wall formation. This chain is UDP-N-acetylenolpyruvoylglucosamine reductase, found in Xanthomonas oryzae pv. oryzae (strain KACC10331 / KXO85).